A 393-amino-acid chain; its full sequence is Branched-chain-amino-acid aminotransferase, mitochondrial (393 aa).

The transit peptide at 1–16 directs the protein to the mitochondrion; that stretch reads MLQRHSLKLGKFSIRT. An N6-(pyridoxal phosphate)lysine modification is found at K219. Phosphothreonine is present on T315.

The protein belongs to the class-IV pyridoxal-phosphate-dependent aminotransferase family. It depends on pyridoxal 5'-phosphate as a cofactor.

It localises to the mitochondrion matrix. It catalyses the reaction L-leucine + 2-oxoglutarate = 4-methyl-2-oxopentanoate + L-glutamate. The catalysed reaction is L-isoleucine + 2-oxoglutarate = (S)-3-methyl-2-oxopentanoate + L-glutamate. It carries out the reaction L-valine + 2-oxoglutarate = 3-methyl-2-oxobutanoate + L-glutamate. The enzyme catalyses a 2-oxocarboxylate + L-methionine = 4-methylsulfanyl-2-oxobutanoate + an L-alpha-amino acid. Its pathway is amino-acid biosynthesis; L-isoleucine biosynthesis; L-isoleucine from 2-oxobutanoate: step 4/4. The protein operates within amino-acid biosynthesis; L-leucine biosynthesis; L-leucine from 3-methyl-2-oxobutanoate: step 4/4. It functions in the pathway amino-acid biosynthesis; L-valine biosynthesis; L-valine from pyruvate: step 4/4. It participates in amino-acid biosynthesis; L-methionine biosynthesis via salvage pathway; L-methionine from S-methyl-5-thio-alpha-D-ribose 1-phosphate: step 6/6. Mitochondrial isozyme of branched-chain-amino-acid aminotransferase, involved in the biosynthesis of the branched chain amino acids (BCAAs) leucine, isoleucine, and valine. Catalyzes the formation of methionine from 2-keto-4-methylthiobutyrate (KMTB) in the methionine salvage pathway primarily using BCAAs (leucine, isoleucine, and valine) as the amino donors. Appears to be involved in the regulation of the cell cycle, although this may be indirect via metabolic changes. Connects BCAAs and TCA-cycle metabolism governing TCA-cycle flux to activate TORC1 signaling. High copy suppressor of a temperature-sensitive mutation in the ABC transporter, ATM1. The polypeptide is Branched-chain-amino-acid aminotransferase, mitochondrial (Saccharomyces cerevisiae (strain ATCC 204508 / S288c) (Baker's yeast)).